Here is a 278-residue protein sequence, read N- to C-terminus: Sulfur carrier protein FdhD (278 aa).

The active-site Cysteine persulfide intermediate is the C121. Position 260-265 (260-265 (FCKPGR)) interacts with Mo-bis(molybdopterin guanine dinucleotide).

This sequence belongs to the FdhD family.

It is found in the cytoplasm. In terms of biological role, required for formate dehydrogenase (FDH) activity. Acts as a sulfur carrier protein that transfers sulfur from IscS to the molybdenum cofactor prior to its insertion into FDH. The chain is Sulfur carrier protein FdhD from Escherichia coli O127:H6 (strain E2348/69 / EPEC).